The sequence spans 136 residues: Autophagy-related protein 41 (136 aa).

The interval 127 to 136 is ATG9-binding; it reads QNYRLWLSSV.

Interacts with ATG9.

The protein resides in the preautophagosomal structure membrane. Its function is as follows. Involved in both selective and non-selective autophagy. Does not appear to play a role in determining the size of autophagosomes, but rather influences their formation rate. With ATG9, plays a role in the delivery of donor membrane to expanding phagophore. The sequence is that of Autophagy-related protein 41 from Saccharomyces cerevisiae (strain ATCC 204508 / S288c) (Baker's yeast).